Consider the following 1204-residue polypeptide: Probable cation-transporting ATPase 13A4 (1204 aa).

Residues 1-32 (MGENPAKSHYAQLNLGEENEMEIFGYKTQCCR) lie on the Cytoplasmic side of the membrane. Residues 33 to 53 (KALCIAGYILSCGALLLLFYW) traverse the membrane as a helical segment. Over 54–219 (KPEWDVWANC…FSVCLWFAED (166 aa)) the chain is Extracellular. A helical transmembrane segment spans residues 220 to 242 (YMEYAAAIIIMSPLSISLTVYDL). Residues 243-397 (RQQSVKLQRL…NFRLYRDALR (155 aa)) are Cytoplasmic-facing. Residues 398-418 (FLMCLIAFAAIGMIYTVCVFA) form a helical membrane-spanning segment. The Extracellular portion of the chain corresponds to 419 to 433 (LNGEEAGEVVKKALD). Residues 434–454 (VITIAVPPALPAALTTGIIYT) traverse the membrane as a helical segment. At 455-897 (QRRLKKKGIF…REGRAALVTS (443 aa)) the chain is on the cytoplasmic side. Aspartate 483 (4-aspartylphosphate intermediate) is an active-site residue. Residues aspartate 845 and aspartate 849 each coordinate Mg(2+). Residues 898-918 (FCMFKYMALYSTIQYLGVLLL) form a helical membrane-spanning segment. Residues 919-929 (YWQLNSFGNYQ) lie on the Extracellular side of the membrane. A helical transmembrane segment spans residues 930–950 (FLFQDLAITTVIGMTMSFTEA). Residues 951-967 (YPKLVPYRPPSQLVSPP) are Cytoplasmic-facing. The helical transmembrane segment at 968 to 988 (LLLSVILNILFSLGMQILGFL) threads the bilayer. Topologically, residues 989 to 1043 (MVQKQPWYSKTDIHSACLSVNNHVENSSSASSLGLHGVGGGDPTEVDNGYKSYEN) are extracellular. A helical membrane pass occupies residues 1044-1064 (TTVWLLSTINCLIIALVFSKG). Residues 1065 to 1075 (KPFRQPIYTNY) lie on the Cytoplasmic side of the membrane. The chain crosses the membrane as a helical span at residues 1076–1096 (VFIMVLVGQLGVCLFLVFADI). The Extracellular segment spans residues 1097 to 1113 (DDLYSKMDLVCTPTTWR). A helical transmembrane segment spans residues 1114–1134 (ISMVMMLAVTLAVSFLVEEAI). The Cytoplasmic portion of the chain corresponds to 1135-1204 (IENRALWLWL…PTFDSNEDAL (70 aa)).

The protein belongs to the cation transport ATPase (P-type) (TC 3.A.3) family. Type V subfamily.

It localises to the membrane. The catalysed reaction is ATP + H2O = ADP + phosphate + H(+). In Gallus gallus (Chicken), this protein is Probable cation-transporting ATPase 13A4 (ATP13A4).